A 321-amino-acid polypeptide reads, in one-letter code: Protein OPG049 (321 aa).

The N-terminal stretch at 1–20 (MGTNGVRVFVILYLLAVCGC) is a signal peptide. N-linked (GlcNAc...) asparagine; by host glycosylation is found at Asn36, Asn41, Asn72, Asn79, Asn108, Asn144, Asn220, and Asn245. A helical transmembrane segment spans residues 286 to 306 (LIMIVLITMLSIILVIIVVIA).

Belongs to the orthopoxvirus OPG049 family.

The protein resides in the host cell membrane. Its function is as follows. Plays a role in the spread of virus to neighboring cells ex vivo. This chain is Protein OPG049 (OPG049), found in Homo sapiens (Human).